Here is a 103-residue protein sequence, read N- to C-terminus: uncharacterized protein (103 aa).

The EthD domain maps to 12–88 (ADPAAFDEHY…AAADVANFAS (77 aa)).

This is an uncharacterized protein from Rhodococcus erythropolis (Arthrobacter picolinophilus).